A 144-amino-acid polypeptide reads, in one-letter code: Superoxide dismutase [Mn], mitochondrial (144 aa).

Mn(2+)-binding residues include His-10, His-58, and Asp-143.

This sequence belongs to the iron/manganese superoxide dismutase family. As to quaternary structure, homotetramer. Mn(2+) serves as cofactor.

Its subcellular location is the mitochondrion matrix. It carries out the reaction 2 superoxide + 2 H(+) = H2O2 + O2. Its function is as follows. Destroys superoxide anion radicals which are normally produced within the cells and which are toxic to biological systems. The chain is Superoxide dismutase [Mn], mitochondrial from Petromyzon marinus (Sea lamprey).